The following is a 78-amino-acid chain: Exodeoxyribonuclease 7 small subunit (78 aa).

This sequence belongs to the XseB family. Heterooligomer composed of large and small subunits.

The protein localises to the cytoplasm. The catalysed reaction is Exonucleolytic cleavage in either 5'- to 3'- or 3'- to 5'-direction to yield nucleoside 5'-phosphates.. Bidirectionally degrades single-stranded DNA into large acid-insoluble oligonucleotides, which are then degraded further into small acid-soluble oligonucleotides. The protein is Exodeoxyribonuclease 7 small subunit of Psychromonas ingrahamii (strain DSM 17664 / CCUG 51855 / 37).